The following is a 524-amino-acid chain: PiggyBac transposable element-derived protein 5 (524 aa).

Residues 30–117 form a disordered region; that stretch reads DDVFGESGPD…DTGGPTRKMP (88 aa). Residues 47-59 show a composition bias toward low complexity; it reads STSAASRSSSAAS. A compositionally biased stretch (pro residues) spans 67–79; the sequence is PGPPGAAPPPPRA. The span at 98–108 shows a compositional bias: basic and acidic residues; that stretch reads LRDRPPPRFED. Serine 521 carries the phosphoserine modification.

It localises to the nucleus. Its function is as follows. Transposase that mediates sequence-specific genomic rearrangements. Can induce genomic rearrangements that inactivate the HPRT1 gene. This Homo sapiens (Human) protein is PiggyBac transposable element-derived protein 5 (PGBD5).